The primary structure comprises 128 residues: Large ribosomal subunit protein bL12 (128 aa).

This sequence belongs to the bacterial ribosomal protein bL12 family. As to quaternary structure, homodimer. Part of the ribosomal stalk of the 50S ribosomal subunit. Forms a multimeric L10(L12)X complex, where L10 forms an elongated spine to which 2 to 4 L12 dimers bind in a sequential fashion. Binds GTP-bound translation factors.

Functionally, forms part of the ribosomal stalk which helps the ribosome interact with GTP-bound translation factors. Is thus essential for accurate translation. The protein is Large ribosomal subunit protein bL12 of Petrotoga mobilis (strain DSM 10674 / SJ95).